Here is a 161-residue protein sequence, read N- to C-terminus: Phosphopantetheine adenylyltransferase (161 aa).

Ser-11 contacts substrate. ATP is bound by residues 11–12 (SF) and His-19. 3 residues coordinate substrate: Lys-43, Leu-75, and Arg-89. ATP contacts are provided by residues 90–92 (GLR), Glu-100, and 125–131 (YSYLSSS).

It belongs to the bacterial CoaD family. Homohexamer. It depends on Mg(2+) as a cofactor.

It is found in the cytoplasm. It catalyses the reaction (R)-4'-phosphopantetheine + ATP + H(+) = 3'-dephospho-CoA + diphosphate. It participates in cofactor biosynthesis; coenzyme A biosynthesis; CoA from (R)-pantothenate: step 4/5. Reversibly transfers an adenylyl group from ATP to 4'-phosphopantetheine, yielding dephospho-CoA (dPCoA) and pyrophosphate. The chain is Phosphopantetheine adenylyltransferase from Geobacter sp. (strain M21).